The chain runs to 494 residues: 2,3-bisphosphoglycerate-independent phosphoglycerate mutase (494 aa).

D12 and S62 together coordinate Mn(2+). The active-site Phosphoserine intermediate is S62. Residues H121, 150-151, R181, R187, 252-255, and K317 each bind substrate; these read RD and RSDR. Residues D384, H388, D425, H426, and H443 each coordinate Mn(2+).

Belongs to the BPG-independent phosphoglycerate mutase family. In terms of assembly, monomer. The cofactor is Mn(2+).

The enzyme catalyses (2R)-2-phosphoglycerate = (2R)-3-phosphoglycerate. Its pathway is carbohydrate degradation; glycolysis; pyruvate from D-glyceraldehyde 3-phosphate: step 3/5. Catalyzes the interconversion of 2-phosphoglycerate and 3-phosphoglycerate. In Anaplasma marginale (strain St. Maries), this protein is 2,3-bisphosphoglycerate-independent phosphoglycerate mutase.